The primary structure comprises 151 residues: Protein Smg homolog (151 aa).

The protein belongs to the Smg family.

The protein is Protein Smg homolog of Laribacter hongkongensis (strain HLHK9).